The sequence spans 158 residues: Transcription elongation factor GreA (158 aa).

Positions 53–75 form a coiled coil; that stretch reads AKERQGQVEATIGDLEDKLSRAQ.

The protein belongs to the GreA/GreB family.

Functionally, necessary for efficient RNA polymerase transcription elongation past template-encoded arresting sites. The arresting sites in DNA have the property of trapping a certain fraction of elongating RNA polymerases that pass through, resulting in locked ternary complexes. Cleavage of the nascent transcript by cleavage factors such as GreA or GreB allows the resumption of elongation from the new 3'terminus. GreA releases sequences of 2 to 3 nucleotides. This chain is Transcription elongation factor GreA, found in Sphingopyxis alaskensis (strain DSM 13593 / LMG 18877 / RB2256) (Sphingomonas alaskensis).